A 60-amino-acid polypeptide reads, in one-letter code: UPF0434 protein Mfla_2088 (60 aa).

It belongs to the UPF0434 family.

This chain is UPF0434 protein Mfla_2088, found in Methylobacillus flagellatus (strain ATCC 51484 / DSM 6875 / VKM B-1610 / KT).